We begin with the raw amino-acid sequence, 455 residues long: Bifunctional protein GlmU (455 aa).

The pyrophosphorylase stretch occupies residues 1-226 (MSLDIVILAA…AMEVQGANDR (226 aa)). Residues 8–11 (LAAG), lysine 22, glutamine 73, 78–79 (GT), 99–101 (YGD), glycine 136, glutamate 151, asparagine 166, and asparagine 224 contribute to the UDP-N-acetyl-alpha-D-glucosamine site. Aspartate 101 contacts Mg(2+). Residue asparagine 224 participates in Mg(2+) binding. Positions 227 to 247 (RQLSELERHYQLREGRRLMAQ) are linker. An N-acetyltransferase region spans residues 248-455 (GVTLRDPARF…WKRPEKIKKS (208 aa)). Residues arginine 330 and lysine 348 each coordinate UDP-N-acetyl-alpha-D-glucosamine. Residue histidine 360 is the Proton acceptor of the active site. Residues tyrosine 363 and asparagine 374 each coordinate UDP-N-acetyl-alpha-D-glucosamine. Acetyl-CoA is bound by residues alanine 377, 383-384 (NY), serine 402, alanine 420, and arginine 437.

It in the N-terminal section; belongs to the N-acetylglucosamine-1-phosphate uridyltransferase family. In the C-terminal section; belongs to the transferase hexapeptide repeat family. Homotrimer. It depends on Mg(2+) as a cofactor.

It is found in the cytoplasm. The enzyme catalyses alpha-D-glucosamine 1-phosphate + acetyl-CoA = N-acetyl-alpha-D-glucosamine 1-phosphate + CoA + H(+). It carries out the reaction N-acetyl-alpha-D-glucosamine 1-phosphate + UTP + H(+) = UDP-N-acetyl-alpha-D-glucosamine + diphosphate. It functions in the pathway nucleotide-sugar biosynthesis; UDP-N-acetyl-alpha-D-glucosamine biosynthesis; N-acetyl-alpha-D-glucosamine 1-phosphate from alpha-D-glucosamine 6-phosphate (route II): step 2/2. Its pathway is nucleotide-sugar biosynthesis; UDP-N-acetyl-alpha-D-glucosamine biosynthesis; UDP-N-acetyl-alpha-D-glucosamine from N-acetyl-alpha-D-glucosamine 1-phosphate: step 1/1. It participates in bacterial outer membrane biogenesis; LPS lipid A biosynthesis. Functionally, catalyzes the last two sequential reactions in the de novo biosynthetic pathway for UDP-N-acetylglucosamine (UDP-GlcNAc). The C-terminal domain catalyzes the transfer of acetyl group from acetyl coenzyme A to glucosamine-1-phosphate (GlcN-1-P) to produce N-acetylglucosamine-1-phosphate (GlcNAc-1-P), which is converted into UDP-GlcNAc by the transfer of uridine 5-monophosphate (from uridine 5-triphosphate), a reaction catalyzed by the N-terminal domain. The protein is Bifunctional protein GlmU of Pseudomonas putida (strain ATCC 47054 / DSM 6125 / CFBP 8728 / NCIMB 11950 / KT2440).